Here is a 563-residue protein sequence, read N- to C-terminus: Delta-1-pyrroline-5-carboxylate dehydrogenase, mitochondrial (563 aa).

A mitochondrion-targeting transit peptide spans 1 to 24 (MLLRSAALCRALLARRGRAAGLCR). Ser-44 is modified (phosphoserine). Residue Lys-52 is modified to N6-acetyllysine. Lys-93, Lys-99, Lys-114, Lys-130, and Lys-175 each carry N6-acetyllysine; alternate. N6-succinyllysine; alternate occurs at positions 93, 99, 114, 130, and 175. NAD(+)-binding positions include Ser-208, Lys-233, and 286 to 290 (GSVPT). The active-site Proton acceptor is Glu-314. Lys-318 carries the N6-acetyllysine modification. An N6-succinyllysine modification is found at Lys-347. Cys-348 serves as the catalytic Nucleophile. 2 positions are modified to N6-acetyllysine: Lys-365 and Lys-376. The residue at position 395 (Lys-395) is an N6-succinyllysine. Glu-447 lines the NAD(+) pocket. Position 509 is an N6-acetyllysine; alternate (Lys-509). Lys-509 is subject to N6-succinyllysine; alternate. Position 513 (Ser-513) interacts with substrate. Lys-531 carries the N6-acetyllysine modification.

Belongs to the aldehyde dehydrogenase family. As to quaternary structure, homodimer.

It is found in the mitochondrion matrix. It catalyses the reaction L-glutamate 5-semialdehyde + NAD(+) + H2O = L-glutamate + NADH + 2 H(+). The protein operates within amino-acid degradation; L-proline degradation into L-glutamate; L-glutamate from L-proline: step 2/2. In terms of biological role, irreversible conversion of delta-1-pyrroline-5-carboxylate (P5C), derived either from proline or ornithine, to glutamate. This is a necessary step in the pathway interconnecting the urea and tricarboxylic acid cycles. The preferred substrate is glutamic gamma-semialdehyde, other substrates include succinic, glutaric and adipic semialdehydes. This is Delta-1-pyrroline-5-carboxylate dehydrogenase, mitochondrial (ALDH4A1) from Bos taurus (Bovine).